Reading from the N-terminus, the 535-residue chain is Calcium-dependent protein kinase 5 (535 aa).

Positions 1-46 are disordered; it reads MGNACRGSFGGKTFQGYPQPQDHSESNSNPKHNSDSPKPKKEQQPL. Gly2 is lipidated: N-myristoyl glycine. Cys5 carries the S-palmitoyl cysteine lipid modification. A compositionally biased stretch (basic and acidic residues) spans 32 to 43; it reads HNSDSPKPKKEQ. A Protein kinase domain is found at 72-330; the sequence is YTLGRKLGQG…AHEVLCHPWI (259 aa). ATP is bound by residues 78–86 and Lys101; that span reads LGQGQFGTT. Asp196 serves as the catalytic Proton acceptor. Positions 336-366 are autoinhibitory domain; it reads APDRALDPAVLSRLKHFSAMNKLKKMALRVI. EF-hand domains follow at residues 373–408, 409–444, 445–480, and 484–514; these read EEIAGLKEMFKAMDTDNSGAITFDELKAGLRKYGST, LKDIEIRELMDAADVDNSGTIDYGEFIAATIHLNKL, DREEHLMAAFQYFDKDGSGYITVDELQQACADHNIT, and FEDIIREVDQDNDGRIDYGEFVAMMQKGNPC. The Ca(2+) site is built by Asp386, Asp388, Ser390, Glu397, Asp422, Asp424, Ser426, Thr428, Glu433, Asp458, Asp460, Ser462, Tyr464, Glu469, Asp492, Asp494, Asp496, Arg498, and Glu503.

Belongs to the protein kinase superfamily. Ser/Thr protein kinase family. CDPK subfamily.

Its subcellular location is the cell membrane. It carries out the reaction L-seryl-[protein] + ATP = O-phospho-L-seryl-[protein] + ADP + H(+). The enzyme catalyses L-threonyl-[protein] + ATP = O-phospho-L-threonyl-[protein] + ADP + H(+). Its activity is regulated as follows. Activated by calcium. Autophosphorylation may play an important role in the regulation of the kinase activity. In terms of biological role, regulates the production of reactive oxygen species (ROS) by NADPH oxidase. In Solanum tuberosum (Potato), this protein is Calcium-dependent protein kinase 5 (CPK5).